A 662-amino-acid chain; its full sequence is Carboxysome assembly protein CsoS2 (662 aa).

Residues 1-227 (MSTSNAQSGR…KRRNAKEAPQ (227 aa)) are N-terminal domain. Disordered regions lie at residues 1 to 258 (MSTS…SESG), 277 to 322 (NCDV…TCSA), and 342 to 419 (PAKS…RGSC). One copy of the N-repeat 1 repeat lies at 8–27 (SGRAAAIARRNAQVKGKGYT). 2 stretches are compositionally biased toward low complexity: residues 28–57 (ASAAPAAPRKPAAPVAEPVVAAAPAPSQPS) and 64–76 (SVAPTATPAASAA). The stretch at 58–72 (RSRRKVSVAPTATPA) is one N-repeat 2 repeat. Basic and acidic residues predominate over residues 120-135 (RQAKAEKPTKRSERRT). Residues 141–150 (VASQQPSGRL) show a composition bias toward polar residues. Residues 147 to 168 (SGRLQSKAYRKAQAKGKAGQEA) form an N-repeat 3 repeat. Composition is skewed to low complexity over residues 161–170 (KGKAGQEAFK), 237–247 (GQSVSGTQVGQ), and 289–300 (VTQTQTTRGQVV). 5 M-repeat repeats span residues 228–278 (KVGE…SKNC), 288–338 (KVTQ…KMYC), 388–436 (KVMP…AKAC), 446–491 (KVTA…TEQF), and 496–550 (VDEQ…AMVC). Residues 228–559 (KVGESQTLHG…CDSTNAAAPG (332 aa)) are middle region. The span at 391-404 (PSQTAKGNTTTGSQ) shows a compositional bias: polar residues. A C-terminal domain region spans residues 560-631 (ESDFPAMIGQ…SPMGASQYRP (72 aa)). The C-repeat 1 repeat unit spans residues 564-572 (PAMIGQAQP). 2 disordered regions span residues 588 to 607 (KITGDGWDRGSKVTGTDGPW) and 619 to 662 (AGQS…GARA). Residues 632-662 (VNNEVPMSPITGSSGNTDTGAKVTLSGGARA) form a C-terminal peptide region. Polar residues predominate over residues 641–650 (ITGSSGNTDT).

The protein belongs to the CsoS2 family. In terms of assembly, interacts via its N-terminal repeats with RuBisCO. Interacts with the major shell protein CsoS1. Post-translationally, unlike H.neapolitanus and predictions for P.marinus strain MIT 9313, this protein is not thought to have ribosomal frameshifting.

It is found in the carboxysome. Its function is as follows. Required for alpha-carboxysome (Cb) assembly, mediates interaction between RuBisCO and the Cb shell. The protein is probably intrinsically disordered. The C-terminal repeats act as the encapsulation signal to target proteins to the Cb; they are necessary and sufficient to target both CsoS2 and foreign proteins to the Cb. The N-terminal repeats of this protein bind simultaneously to both subunits of RuBisCO. Probably also interacts with the major shell proteins (CsoS1); that interaction would increase the local concentration of CsoS2 so that it can condense RuBisCO and full carboxysomes can be formed. This is Carboxysome assembly protein CsoS2 from Hydrogenovibrio crunogenus (strain DSM 25203 / XCL-2) (Thiomicrospira crunogena).